Reading from the N-terminus, the 375-residue chain is Chaperone protein DnaJ (375 aa).

The 66-residue stretch at 6–71 (DYYEILGVSR…DKRARYDQYG (66 aa)) folds into the J domain. Residues 132–214 (GTTKKITIPR…CQGSGKVRKQ (83 aa)) form a CR-type zinc finger. Zn(2+) contacts are provided by C145, C148, C162, C165, C188, C191, C202, and C205. CXXCXGXG motif repeat units lie at residues 145–152 (CDTCNGTG), 162–169 (CPQCNGSG), 188–195 (CDRCGGRG), and 202–209 (CPTCQGSG). The tract at residues 222–243 (PPGVDTGTRLRMPNEGEAGDKG) is disordered.

Belongs to the DnaJ family. Homodimer. It depends on Zn(2+) as a cofactor.

The protein localises to the cytoplasm. Participates actively in the response to hyperosmotic and heat shock by preventing the aggregation of stress-denatured proteins and by disaggregating proteins, also in an autonomous, DnaK-independent fashion. Unfolded proteins bind initially to DnaJ; upon interaction with the DnaJ-bound protein, DnaK hydrolyzes its bound ATP, resulting in the formation of a stable complex. GrpE releases ADP from DnaK; ATP binding to DnaK triggers the release of the substrate protein, thus completing the reaction cycle. Several rounds of ATP-dependent interactions between DnaJ, DnaK and GrpE are required for fully efficient folding. Also involved, together with DnaK and GrpE, in the DNA replication of plasmids through activation of initiation proteins. The protein is Chaperone protein DnaJ of Halothermothrix orenii (strain H 168 / OCM 544 / DSM 9562).